A 319-amino-acid polypeptide reads, in one-letter code: N-acyl-aromatic-L-amino acid amidohydrolase (carboxylate-forming) (319 aa).

Positions 1–210 (MCSLPVPREP…TVLDFIELFN (210 aa)) are hydrolytic domain. Residues H21 and E24 each contribute to the Zn(2+) site. Substrate contacts are provided by residues R63 and 70–71 (NR). H116 provides a ligand contact to Zn(2+). Substrate is bound by residues E178 and Y288. The segment at 211–318 (QGTAFPAFEM…PALTPAPSPA (108 aa)) is shielding domain.

This sequence belongs to the AspA/AstE family. Aspartoacylase subfamily. In terms of assembly, exists as a mixture of homodimers and homotetramer, both catalytically active. (Microbial infection) Interacts with hepatitis C virus/HCV core protein. Zn(2+) serves as cofactor.

The protein resides in the apical cell membrane. Its subcellular location is the cytoplasm. It carries out the reaction an N-acyl-aromatic L-alpha-amino acid + H2O = an aromatic L-alpha-amino acid + a carboxylate. The catalysed reaction is an N-acetyl-L-cysteine-S-conjugate + H2O = an S-substituted L-cysteine + acetate. Plays an important role in deacetylating mercapturic acids in kidney proximal tubules. Also acts on N-acetyl-aromatic amino acids. The chain is N-acyl-aromatic-L-amino acid amidohydrolase (carboxylate-forming) (ACY3) from Homo sapiens (Human).